The sequence spans 367 residues: MRWFLPWTLAAVTAAAASTVLATALSPAPTTMDFTPAPLEDTSSRPQFCKWPCECPPSPPRCPLGVSLITDGCECCKMCAQQLGDNCTEAAICDPHRGLYCDYSGDRPRYAIGVCAQVVGVGCVLDGVRYNNGQSFQPNCKYNCTCIDGAVGCTPLCLRVRPPRLWCPHPRRVSIPGHCCEQWVCEDDAKRPRKTAPRDTGAFDAVGEVEAWHRNCIAYTSPWSPCSTSCGLGVSTRISNVNAQCWPEQESRLCNLRPCDVDIHTLIKAGKKCLAVYQPEASMNFTLAGCISTRSYQPKYCGVCMDNRCCIPYKSKTIDVSFQCPDGLGFSRQVLWINACFCNLSCRNPNDIFADLESYPDFSEIAN.

The signal sequence occupies residues 1–22 (MRWFLPWTLAAVTAAAASTVLA). In terms of domain architecture, IGFBP N-terminal spans 45–118 (RPQFCKWPCE…RYAIGVCAQV (74 aa)). 4 disulfides stabilise this stretch: Cys-49–Cys-73, Cys-53–Cys-75, Cys-55–Cys-76, and Cys-62–Cys-79. The N-linked (GlcNAc...) asparagine glycan is linked to Asn-86. 2 disulfides stabilise this stretch: Cys-87–Cys-101 and Cys-93–Cys-115. Residues 121–186 (VGCVLDGVRY…GHCCEQWVCE (66 aa)) enclose the VWFC domain. The N-linked (GlcNAc...) asparagine glycan is linked to Asn-143. One can recognise a TSP type-1 domain in the interval 215 to 260 (NCIAYTSPWSPCSTSCGLGVSTRISNVNAQCWPEQESRLCNLRPCD). Intrachain disulfides connect Cys-273-Cys-310, Cys-290-Cys-324, Cys-301-Cys-340, Cys-304-Cys-342, and Cys-309-Cys-346. Positions 273 to 347 (CLAVYQPEAS…NACFCNLSCR (75 aa)) constitute a CTCK domain. N-linked (GlcNAc...) asparagine glycosylation occurs at Asn-284. The N-linked (GlcNAc...) asparagine glycan is linked to Asn-343.

The protein belongs to the CCN family. Expressed in heart, kidney, lung, pancreas, placenta, ovary, small intestine and spleen. Isoform 2 is expressed predominantly in scirrhous gastric carcinoma and, weakly in placenta. Overexpression is associated with several cancers including breast cancer and colon tumors. Isoform 2 is overexpressed in scirrhous gastric carcinoma.

It localises to the secreted. Downstream regulator in the Wnt/Frizzled-signaling pathway. Associated with cell survival. Attenuates p53-mediated apoptosis in response to DNA damage through activation of AKT kinase. Up-regulates the anti-apoptotic Bcl-X(L) protein. Adheres to skin and melanoma fibroblasts. In vitro binding to skin fibroblasts occurs through the proteoglycans, decorin and biglycan. The polypeptide is CCN family member 4 (Homo sapiens (Human)).